The sequence spans 545 residues: Germacrene D synthase 1 (545 aa).

4 residues coordinate Mg(2+): Asp-298, Asp-302, Asn-443, and Glu-451. The short motif at 298–302 (DDTFD) is the DDXXD motif element.

The protein belongs to the terpene synthase family. Mg(2+) is required as a cofactor.

It is found in the cytoplasm. It localises to the cytosol. It catalyses the reaction (2E,6E)-farnesyl diphosphate = (-)-germacrene D + diphosphate. Its pathway is secondary metabolite biosynthesis; terpenoid biosynthesis. Sesquiterpene synthase involved in germacrene D biosynthesis. Also produces at least 13 additional sesquiterpene products, including germacrene C and (+)-germacrene A, beta-ylangene, (E)-beta-farnesene and (E,E)-alpha-farnesene. The sequence is that of Germacrene D synthase 1 from Pogostemon cablin (Patchouli).